A 344-amino-acid chain; its full sequence is Heat-inducible transcription repressor HrcA (344 aa).

This sequence belongs to the HrcA family.

In terms of biological role, negative regulator of class I heat shock genes (grpE-dnaK-dnaJ and groELS operons). Prevents heat-shock induction of these operons. This is Heat-inducible transcription repressor HrcA from Streptococcus equi subsp. zooepidemicus (strain H70).